Consider the following 237-residue polypeptide: Phosphoribosylaminoimidazole-succinocarboxamide synthase (237 aa).

Belongs to the SAICAR synthetase family.

It carries out the reaction 5-amino-1-(5-phospho-D-ribosyl)imidazole-4-carboxylate + L-aspartate + ATP = (2S)-2-[5-amino-1-(5-phospho-beta-D-ribosyl)imidazole-4-carboxamido]succinate + ADP + phosphate + 2 H(+). It participates in purine metabolism; IMP biosynthesis via de novo pathway; 5-amino-1-(5-phospho-D-ribosyl)imidazole-4-carboxamide from 5-amino-1-(5-phospho-D-ribosyl)imidazole-4-carboxylate: step 1/2. The chain is Phosphoribosylaminoimidazole-succinocarboxamide synthase from Pseudomonas fluorescens (strain Pf0-1).